The following is a 407-amino-acid chain: Flagellar calcium-binding protein TB-44A (407 aa).

Residues 1 to 27 form a disordered region; it reads MGCSASKDTTNSKDGAASKGGKDGKTT. The interval 25–399 is 2 X 186 AA almost perfect repeats; the sequence is KTTADRKVAW…LQVCGDPDGE (375 aa). The 36-residue stretch at 48–83 folds into the EF-hand 1 domain; that stretch reads ESKSRRIELFKRFDTNGTGKLSFREVLDGCYSILKL. Residues aspartate 61, asparagine 63, threonine 65, lysine 67, and glutamate 72 each coordinate Ca(2+). The tract at residues 110–121 is ancestral calcium site 2; the sequence is GVGEEDLVEFLE. 3 EF-hand domains span residues 130-165, 167-202, and 237-272; these read YDIF…WKEW, VDIT…KKLQ, and ESKS…ILKL. The Ca(2+) site is built by aspartate 143, aspartate 145, serine 147, glutamate 154, aspartate 180, asparagine 182, serine 184, glutamate 191, aspartate 250, asparagine 252, threonine 254, lysine 256, and glutamate 261. Positions 299–310 are ancestral calcium site 6; the sequence is GVGEEDLVEFLE. EF-hand domains are found at residues 319-354 and 356-391; these read YDIF…WKEW and VDIT…KKLQ. Positions 332, 334, 336, 343, 369, 371, 373, and 380 each coordinate Ca(2+).

Belongs to the calflagin family.

The protein resides in the cell projection. It localises to the cilium. Its subcellular location is the flagellum. Functionally, may contribute to the rapid motility of the trypanosomes, playing a role either in flagellar structure or in calcium metabolism. Could alternate between a GDP-bound inactive form to a calcium/GTP-bound active form. The polypeptide is Flagellar calcium-binding protein TB-44A (Trypanosoma brucei brucei).